A 278-amino-acid chain; its full sequence is Ras-related protein Rab-40A-like (278 aa).

Residues G26, K27, and S28 each contribute to the GTP site. Residue S28 coordinates Mg(2+). Residues 41-49 form a switch-I region; sequence SPYSHLGGI. D69 contacts Mg(2+). Positions 72, 126, and 127 each coordinate GTP. The segment at 72 to 88 is switch-II; the sequence is GQGRFCTIFRSYSRGAQ. Residues 175-228 form the SOCS box domain; the sequence is LLRHRLNWLGRPSKVLSLQDLCCRTIVSCTPVHLVDKLPLPIALRSHLKSFSMA. The S-palmitoyl cysteine moiety is linked to residue C270. A lipid anchor (S-geranylgeranyl cysteine) is attached at C275.

The protein belongs to the small GTPase superfamily. Rab family. Mg(2+) is required as a cofactor. In terms of tissue distribution, expressed in brain, lung, heart, skeletal muscle, kidney and liver. Highest expression in brain. Expressed in fetal brain and kidney.

The protein localises to the membrane. It localises to the cytoplasm. Its subcellular location is the mitochondrion. It catalyses the reaction GTP + H2O = GDP + phosphate + H(+). Its pathway is protein modification; protein ubiquitination. Its activity is regulated as follows. Regulated by guanine nucleotide exchange factors (GEFs) which promote the exchange of bound GDP for free GTP. Regulated by GTPase activating proteins (GAPs) which increase the GTP hydrolysis activity. Inhibited by GDP dissociation inhibitors (GDIs). In terms of biological role, may act as substrate-recognition component of the ECS(RAB40) E3 ubiquitin ligase complex which mediates the ubiquitination and subsequent proteasomal degradation of target proteins. The Rab40 subfamily belongs to the Rab family that are key regulators of intracellular membrane trafficking, from the formation of transport vesicles to their fusion with membranes. Rabs cycle between an inactive GDP-bound form and an active GTP-bound form that is able to recruit to membranes different sets of downstream effectors directly responsible for vesicle formation, movement, tethering and fusion. In Homo sapiens (Human), this protein is Ras-related protein Rab-40A-like.